The primary structure comprises 466 residues: CCA-adding enzyme (466 aa).

ATP-binding residues include S55 and R58. S55 and R58 together coordinate CTP. The Mg(2+) site is built by D67, D69, and D118. Positions 141, 161, and 170 each coordinate ATP. 3 residues coordinate CTP: H141, K161, and Y170.

Belongs to the tRNA nucleotidyltransferase/poly(A) polymerase family. Archaeal CCA-adding enzyme subfamily. As to quaternary structure, homodimer. Requires Mg(2+) as cofactor.

The catalysed reaction is a tRNA precursor + 2 CTP + ATP = a tRNA with a 3' CCA end + 3 diphosphate. The enzyme catalyses a tRNA with a 3' CCA end + 2 CTP + ATP = a tRNA with a 3' CCACCA end + 3 diphosphate. In terms of biological role, catalyzes the addition and repair of the essential 3'-terminal CCA sequence in tRNAs without using a nucleic acid template. Adds these three nucleotides in the order of C, C, and A to the tRNA nucleotide-73, using CTP and ATP as substrates and producing inorganic pyrophosphate. tRNA 3'-terminal CCA addition is required both for tRNA processing and repair. Also involved in tRNA surveillance by mediating tandem CCA addition to generate a CCACCA at the 3' terminus of unstable tRNAs. While stable tRNAs receive only 3'-terminal CCA, unstable tRNAs are marked with CCACCA and rapidly degraded. In Haloarcula marismortui (strain ATCC 43049 / DSM 3752 / JCM 8966 / VKM B-1809) (Halobacterium marismortui), this protein is CCA-adding enzyme.